The sequence spans 550 residues: Chaperonin GroEL (550 aa).

ATP contacts are provided by residues 30–33 (TLGP), Lys-51, 87–91 (DGTTT), Gly-415, 478–480 (NAA), and Asp-494.

This sequence belongs to the chaperonin (HSP60) family. As to quaternary structure, forms a cylinder of 14 subunits composed of two heptameric rings stacked back-to-back. Interacts with the co-chaperonin GroES.

The protein resides in the cytoplasm. The enzyme catalyses ATP + H2O + a folded polypeptide = ADP + phosphate + an unfolded polypeptide.. Functionally, together with its co-chaperonin GroES, plays an essential role in assisting protein folding. The GroEL-GroES system forms a nano-cage that allows encapsulation of the non-native substrate proteins and provides a physical environment optimized to promote and accelerate protein folding. This chain is Chaperonin GroEL, found in Desulfosudis oleivorans (strain DSM 6200 / JCM 39069 / Hxd3) (Desulfococcus oleovorans).